Reading from the N-terminus, the 266-residue chain is Undecaprenyl-diphosphatase (266 aa).

8 consecutive transmembrane segments (helical) span residues 2–22 (INILNAIILGIVQGITEFLPI), 39–59 (LPIIFDIYLHLATVLVIIIYY), 86–106 (LKLILLILIITIVTGVVGTFI), 112–132 (MFILPFILINFIITGILILML), 145–165 (ILLVGIFIGLMQGLGAFPGIS), 184–204 (AFEISFLSLIPIVFGAILFKY), 212–232 (MVLNFFEINLGALVAFVVGII), and 246–266 (LYYFSIYLFALSITFCCFFRI).

It belongs to the UppP family.

The protein resides in the cell inner membrane. It catalyses the reaction di-trans,octa-cis-undecaprenyl diphosphate + H2O = di-trans,octa-cis-undecaprenyl phosphate + phosphate + H(+). Catalyzes the dephosphorylation of undecaprenyl diphosphate (UPP). Confers resistance to bacitracin. The chain is Undecaprenyl-diphosphatase from Borrelia garinii subsp. bavariensis (strain ATCC BAA-2496 / DSM 23469 / PBi) (Borreliella bavariensis).